We begin with the raw amino-acid sequence, 530 residues long: TNF receptor-associated factor 6 (530 aa).

Positions 1–362 are interaction with TAX1BP1; sequence MSLLNCENSC…EAQQCNGIYI (362 aa). The RING-type zinc finger occupies 70–109; sequence CPICLMALREAVQTPCGHRFCKACIIKSIRDAGHKCPVDN. Residue Lys-124 forms a Glycyl lysine isopeptide (Lys-Gly) (interchain with G-Cter in SUMO); alternate linkage. Residue Lys-124 forms a Glycyl lysine isopeptide (Lys-Gly) (interchain with G-Cter in ubiquitin); alternate linkage. Lys-142 is covalently cross-linked (Glycyl lysine isopeptide (Lys-Gly) (interchain with G-Cter in SUMO)). TRAF-type zinc fingers lie at residues 150-202 and 203-259; these read DHQV…EEKE and IHDQ…NHLA. Residues 299-356 adopt a coiled-coil conformation; it reads EDPNYEETIKQLESRLVRQDHQIRELTAKMETQSMYVGELKRTIRTLEDKVAEMEAQQ. Lys-327 participates in a covalent cross-link: Glycyl lysine isopeptide (Lys-Gly) (interchain with G-Cter in ubiquitin). The 150-residue stretch at 358–507 folds into the MATH domain; that stretch reads NGIYIWKIGN…DDTLLVRCEV (150 aa). An interaction with TANK region spans residues 363 to 530; sequence WKIGNFGMHL…FQPRSTDAGV (168 aa). Lys-461 is covalently cross-linked (Glycyl lysine isopeptide (Lys-Gly) (interchain with G-Cter in SUMO)).

The protein belongs to the TNF receptor-associated factor family. A subfamily. In terms of assembly, homotrimer. Homooligomer. N-terminal region is dimeric while C-terminal region is trimeric; maybe providing a mode of oligomerization. Upon IL1B treatment, forms a complex with PELI1, IRAK1, IRAK4 and MYD88; this complex recruits MAP3K7/TAK1, TAB1 and TAB2 to mediate NF-kappa-B activation. Direct binding of SMAD6 to PELI1 prevents the complex formation and hence negatively regulates IL1R-TLR signaling and eventually NF-kappa-B-mediated gene expression. Binds to TNFRSF5/CD40 and TNFRSF11A/RANK. Associates with NGFR, TNFRSF17, IRAK2, IRAK3, PELI2, PELI3, RIPK2, MAP3K1, MAP3K5, MAP3K14, CSK, TRAF, TRAF-interacting protein TRIP and TNF receptor associated protein TDP2. Binds UBE2V1. Interacts with MAVS/IPS1. Interacts with TAX1BP1; this interaction mediates deubiquitination of TRAF6 and inhibition of NF-kappa-B activation. Interacts with IL17R. Interacts with SQSTM1 bridging NTRK1 and NGFR. Forms a ternary complex with SQSTM1 and PRKCZ. Interacts with IL1RL1. Interacts with AJUBA. Interacts with TRAFD1. Interacts with TICAM2. Interacts with ZFAND5. Interacts with ARRB1 and ARRB2. Interacts with MAP3K7 and TAB1/MAP3K7IP1; during IL-1 signaling. Interacts with UBE2N. Interacts with TGFBR1, HDAC1 and RANGAP1. Interacts with AKT1, AKT2 and AKT3. Interacts (via TRAF domains) with NUMBL (via C-terminal). Interacts (via TRAF domains) with DYNC2I2 (via WD domains). Interacts with RBCK1. Interacts with LIMD1 (via LIM domains). Interacts with RSAD2/viperin. Interacts with IFIT3 (via N-terminus). Interacts (via C-terminus) with EIF2AK2/PKR (via the kinase catalytic domain). Interacts with CARD14. Interacts with CD40 and MAP3K8; the interaction is required for ERK activation. Interacts with TICAM1 and this interaction is enhanced in the presence of WDFY1. Interacts with TANK; this interaction increases in response to DNA damage. Interacts with USP10; this interaction increases in response to DNA damage. Interacts with ZC3H12A; this interaction increases in response to DNA damage and is stimulated by TANK. Interacts with WDFY3. Interacts with TRIM13. Interacts with GPS2. Interacts (via C-terminus) with SASH1. Interacts with LRRC19. Interacts with IL17RA and TRAF3IP2. Interacts with TOMM70. Interacts with AMBRA1; interaction is required to mediate 'Lys-63'-linked ubiquitination of ULK1. Interacts with CRBN; this interaction inhibits TLR4-mediated signaling by preventing TRAF6-mediated ubiquitination of ECSIT. As to quaternary structure, (Microbial infection) Interacts (via N-terminal RING domain) with Toxoplasma gondii GRA7; the interaction plays a role in GRA7-induced pro-inflammatory cytokine production in mouse macrophages. In terms of processing, sumoylated on Lys-124, Lys-142 and Lys-461 with SUMO1. Post-translationally, polyubiquitinated on Lys-124 by TRAF3IP2; after cell stimulation with IL17A. Polyubiquitinated; after cell stimulation with IL1B or TGFB. This ligand-induced cell stimulation leads to dimerization/oligomerization of TRAF6 molecules, followed by auto-ubiquitination which involves UBE2N and UBE2V1 and leads to TRAF6 activation. This 'Lys-63' site-specific poly-ubiquitination appears to be associated with the activation of signaling molecules. Endogenous autoubiquitination occurs only for the cytoplasmic form. Deubiquitinated by USP10 in a TANK-dependent manner, leading to the negative regulation of NF-kappa-B signaling upon DNA damage. LRRC19 induces 'Lys-63' ubiquitination. Ubiquitinated at Lys-327 by the SCF(FBXL2) complex, leading to its degradation by the proteasome. As to expression, highly expressed in brain, lung, liver, skeletal muscle, and kidney; lower expression in heart, spleen, and testis.

The protein resides in the cytoplasm. Its subcellular location is the cell cortex. It localises to the nucleus. It is found in the lipid droplet. The catalysed reaction is S-ubiquitinyl-[E2 ubiquitin-conjugating enzyme]-L-cysteine + [acceptor protein]-L-lysine = [E2 ubiquitin-conjugating enzyme]-L-cysteine + N(6)-ubiquitinyl-[acceptor protein]-L-lysine.. The protein operates within protein modification; protein ubiquitination. E3 ubiquitin ligase that, together with UBE2N and UBE2V1, mediates the synthesis of 'Lys-63'-linked-polyubiquitin chains conjugated to proteins, such as ECSIT, IKBKG, IRAK1, AKT1 and AKT2. Also mediates ubiquitination of free/unanchored polyubiquitin chain that leads to MAP3K7 activation. Leads to the activation of NF-kappa-B and JUN. Seems to also play a role in dendritic cells (DCs) maturation and/or activation. Represses c-Myb-mediated transactivation, in B-lymphocytes. Adapter protein that seems to play a role in signal transduction initiated via TNF receptor, IL-1 receptor and IL-17 receptor. Regulates osteoclast differentiation by mediating the activation of adapter protein complex 1 (AP-1) and NF-kappa-B, in response to RANK-L stimulation. Together with MAP3K8, mediates CD40 signals that activate ERK in B-cells and macrophages, and thus may play a role in the regulation of immunoglobulin production. Acts as a regulator of the JNK and NF-kappa-B signaling pathways by initiating assembly of heterotypic 'Lys-63'-/'Lys-48'-linked branched ubiquitin chains that are then recognized by TAB2: TRAF6 catalyzes initial 'Lys-63'-linked-polyubiquitin chains that are then branched via 'Lys-48'-linked polyubiquitin by HUWE1. 'Lys-63'-/'Lys-48'-linked branched ubiquitin chains protect 'Lys-63'-linkages from CYLD deubiquitination. Also participates in the TCR signaling by ubiquitinating LAT. The polypeptide is TNF receptor-associated factor 6 (Traf6) (Mus musculus (Mouse)).